Here is a 302-residue protein sequence, read N- to C-terminus: Probable 5-dehydro-4-deoxyglucarate dehydratase (302 aa).

Belongs to the DapA family.

It catalyses the reaction 5-dehydro-4-deoxy-D-glucarate + H(+) = 2,5-dioxopentanoate + CO2 + H2O. Its pathway is carbohydrate acid metabolism; D-glucarate degradation; 2,5-dioxopentanoate from D-glucarate: step 2/2. The chain is Probable 5-dehydro-4-deoxyglucarate dehydratase from Rhizobium rhizogenes (strain K84 / ATCC BAA-868) (Agrobacterium radiobacter).